Reading from the N-terminus, the 580-residue chain is Glutamine--tRNA ligase (580 aa).

The 'HIGH' region signature appears at 41-51 (PEPNGYLHIGH). Residues 42–44 (EPN) and 48–54 (HIGHAKA) contribute to the ATP site. Positions 74 and 218 each coordinate L-glutamine. ATP-binding positions include Thr-237, 285 to 286 (RL), and 293 to 295 (MSK). The 'KMSKS' region motif lies at 292–296 (VMSKR).

Belongs to the class-I aminoacyl-tRNA synthetase family. Monomer.

The protein localises to the cytoplasm. The enzyme catalyses tRNA(Gln) + L-glutamine + ATP = L-glutaminyl-tRNA(Gln) + AMP + diphosphate. In Xylella fastidiosa (strain M12), this protein is Glutamine--tRNA ligase.